A 144-amino-acid chain; its full sequence is Ribosome-binding factor A (144 aa).

Disordered stretches follow at residues 1–22 (MPRHHQKKSSASGGGSQRQLRV) and 125–144 (TPAVQKDLEQDPDSDREEEQ). Residues 134–144 (QDPDSDREEEQ) are compositionally biased toward acidic residues.

Belongs to the RbfA family. In terms of assembly, monomer. Binds 30S ribosomal subunits, but not 50S ribosomal subunits or 70S ribosomes.

It localises to the cytoplasm. In terms of biological role, one of several proteins that assist in the late maturation steps of the functional core of the 30S ribosomal subunit. Associates with free 30S ribosomal subunits (but not with 30S subunits that are part of 70S ribosomes or polysomes). Required for efficient processing of 16S rRNA. May interact with the 5'-terminal helix region of 16S rRNA. The polypeptide is Ribosome-binding factor A (Bradyrhizobium diazoefficiens (strain JCM 10833 / BCRC 13528 / IAM 13628 / NBRC 14792 / USDA 110)).